Reading from the N-terminus, the 45-residue chain is Thymosin beta-15A (45 aa).

2 stretches are compositionally biased toward basic and acidic residues: residues 1–27 (MSDKPDLSEVEKFDRSKLKKTNTEEKN) and 35–45 (IQQEKECVQTS). Residues 1-45 (MSDKPDLSEVEKFDRSKLKKTNTEEKNTLPSKETIQQEKECVQTS) form a disordered region.

This sequence belongs to the thymosin beta family. In terms of tissue distribution, neuroblastoma-specific.

Its subcellular location is the cytoplasm. The protein localises to the cytoskeleton. In terms of biological role, plays an important role in the organization of the cytoskeleton. Binds to and sequesters actin monomers (G actin) and therefore inhibits actin polymerization. This is Thymosin beta-15A (TMSB15A) from Homo sapiens (Human).